The chain runs to 191 residues: Probable chemoreceptor glutamine deamidase CheD (191 aa).

The protein belongs to the CheD family.

It carries out the reaction L-glutaminyl-[protein] + H2O = L-glutamyl-[protein] + NH4(+). Functionally, probably deamidates glutamine residues to glutamate on methyl-accepting chemotaxis receptors (MCPs), playing an important role in chemotaxis. In Hydrogenovibrio crunogenus (strain DSM 25203 / XCL-2) (Thiomicrospira crunogena), this protein is Probable chemoreceptor glutamine deamidase CheD.